A 300-amino-acid polypeptide reads, in one-letter code: Ribosomal protein L11 methyltransferase (300 aa).

S-adenosyl-L-methionine-binding residues include threonine 152, glycine 173, aspartate 195, and asparagine 234.

It belongs to the methyltransferase superfamily. PrmA family.

The protein resides in the cytoplasm. It carries out the reaction L-lysyl-[protein] + 3 S-adenosyl-L-methionine = N(6),N(6),N(6)-trimethyl-L-lysyl-[protein] + 3 S-adenosyl-L-homocysteine + 3 H(+). Functionally, methylates ribosomal protein L11. The chain is Ribosomal protein L11 methyltransferase from Burkholderia vietnamiensis (strain G4 / LMG 22486) (Burkholderia cepacia (strain R1808)).